The sequence spans 724 residues: Methionine--tRNA ligase (724 aa).

Positions 11 to 21 match the 'HIGH' region motif; that stretch reads PYANGPIHAGH. Residues Cys-143, Cys-146, Cys-156, and Cys-159 each contribute to the Zn(2+) site. The 'KMSKS' region motif lies at 344-348; it reads KFSTS. Residue Thr-347 participates in ATP binding. The tRNA-binding domain maps to 624 to 724; the sequence is EFSKIDLRIG…KEVKLGAKVR (101 aa).

It belongs to the class-I aminoacyl-tRNA synthetase family. MetG type 1 subfamily. As to quaternary structure, homodimer. Zn(2+) serves as cofactor.

Its subcellular location is the cytoplasm. The catalysed reaction is tRNA(Met) + L-methionine + ATP = L-methionyl-tRNA(Met) + AMP + diphosphate. In terms of biological role, is required not only for elongation of protein synthesis but also for the initiation of all mRNA translation through initiator tRNA(fMet) aminoacylation. The protein is Methionine--tRNA ligase of Pyrococcus furiosus (strain ATCC 43587 / DSM 3638 / JCM 8422 / Vc1).